Reading from the N-terminus, the 689-residue chain is 1,4-alpha-glucan-branching enzyme (689 aa).

2 residues coordinate (1,4-alpha-D-glucosyl)n: Trp-93 and Lys-128. Residue Asp-345 is the Nucleophile of the active site. The active-site Proton donor is the Glu-400.

It belongs to the glycosyl hydrolase 13 family. GlgB subfamily.

The protein resides in the cytoplasm. It catalyses the reaction Transfers a segment of a (1-&gt;4)-alpha-D-glucan chain to a primary hydroxy group in a similar glucan chain.. Its pathway is glycan biosynthesis; glycogen biosynthesis. Glycogen-branching enzyme participates in the glycogen biosynthetic process along with glycogenin and glycogen synthase. Generates alpha-1,6-glucosidic branches from alpha-1,4-linked glucose chains, to increase solubility of the glycogen polymer. The polypeptide is 1,4-alpha-glucan-branching enzyme (gbeA) (Aspergillus oryzae (strain ATCC 42149 / RIB 40) (Yellow koji mold)).